A 122-amino-acid chain; its full sequence is Movement protein TGB2 (122 aa).

Topologically, residues 1-12 (MVKSTVPTRPNK) are cytoplasmic. A helical membrane pass occupies residues 13 to 33 (YWPGVVAIGLVSLFIFLSVSN). Over 34–76 (QKHSTTSGDNIHKFSNGGTYRDGSKCITYNRNSPLAYNGSSSN) the chain is Lumenal. The helical transmembrane segment at 77–97 (NTLFWLCLLGLSMVWIAYCGY) threads the bilayer. Topologically, residues 98 to 122 (KSLSGQWHSCQHDKNERNFLFECFE) are cytoplasmic.

The protein belongs to the virgaviridae/benyvirus TGB2 movement protein family. Interacts with movement protein TGB3. TGB1-TGB3-TGB2 complex formation is enhanced by ATP hydrolysis.

Its subcellular location is the host cell junction. The protein localises to the host plasmodesma. It localises to the host endoplasmic reticulum membrane. The protein resides in the host cytoplasm. It is found in the host cytoskeleton. Its function is as follows. Participates in the transport of viral genome to neighboring plant cells directly through plasmodesmata, without any budding. TGBp2 and TGBp3 are necessary for intracellular delivery of TGBp1-containing vRNPs to plasmodesmata. Can gate plasmodesmata and increase their size exclusion limit. To a lesser extent than TGB3, induces host actin cytoskeleton network thickening, which probably plays a major role in virus cell-to-cell movement. This is Movement protein TGB2 from Peanut clump virus (isolate 87/TGTA2) (PCV).